We begin with the raw amino-acid sequence, 443 residues long: Immediate-early protein ICP-46 homolog (443 aa).

A coiled-coil region spans residues glutamate 82–serine 110.

It belongs to the IIV-6 393L family.

In Aedes vexans (Inland floodwater mosquito), this protein is Immediate-early protein ICP-46 homolog.